Reading from the N-terminus, the 311-residue chain is Probable flavin reductase (311 aa).

FMN is bound by residues 38–41 (TANS), 55–61 (CLAKSSR), 88–89 (FA), and Arg95.

Belongs to the non-flavoprotein flavin reductase family.

The sequence is that of Probable flavin reductase from Rhizobium meliloti (strain 1021) (Ensifer meliloti).